We begin with the raw amino-acid sequence, 349 residues long: MNSTLDGNQSSHPFCLLAFGYLETVNFCLLEVLIIVFLTVLIISGNIIVIFVFHCAPLLNHHTTSYFIQTMAYADLFVGVSCVVPSLSLLHHPLPVEESLTCQIFGFVVSVLKSVSMASLACISIDRYIAITKPLTYNTLVTPWRLRLCIFLIWLYSTLVFLPSFFHWGKPGYHGDVFQWCAESWHTDSYFTLFIVMMLYAPAALIVCFTYFNIFRICQQHTKDISERQARFSSQSGETGEVQACPDKRYAMVLFRITSVFYILWLPYIIYFLLESSTGHSNRFASFLTTWLAISNSFCNCVIYSLSNSVFQRGLKRLSGAMCTSCASQTTANDPYTVRSKGPLNGCHI.

The Extracellular segment spans residues 1 to 32 (MNSTLDGNQSSHPFCLLAFGYLETVNFCLLEV). 2 N-linked (GlcNAc...) asparagine glycosylation sites follow: asparagine 2 and asparagine 8. A helical transmembrane segment spans residues 33 to 53 (LIIVFLTVLIISGNIIVIFVF). Over 54 to 75 (HCAPLLNHHTTSYFIQTMAYAD) the chain is Cytoplasmic. The helical transmembrane segment at 76-96 (LFVGVSCVVPSLSLLHHPLPV) threads the bilayer. Residues 97-104 (EESLTCQI) are Extracellular-facing. The helical transmembrane segment at 105-125 (FGFVVSVLKSVSMASLACISI) threads the bilayer. At 126-147 (DRYIAITKPLTYNTLVTPWRLR) the chain is on the cytoplasmic side. The helical transmembrane segment at 148–168 (LCIFLIWLYSTLVFLPSFFHW) threads the bilayer. Over 169 to 191 (GKPGYHGDVFQWCAESWHTDSYF) the chain is Extracellular. The helical transmembrane segment at 192–212 (TLFIVMMLYAPAALIVCFTYF) threads the bilayer. At 213 to 252 (NIFRICQQHTKDISERQARFSSQSGETGEVQACPDKRYAM) the chain is on the cytoplasmic side. A helical transmembrane segment spans residues 253 to 273 (VLFRITSVFYILWLPYIIYFL). At 274 to 283 (LESSTGHSNR) the chain is on the extracellular side. A helical transmembrane segment spans residues 284–304 (FASFLTTWLAISNSFCNCVIY). Residues 305-349 (SLSNSVFQRGLKRLSGAMCTSCASQTTANDPYTVRSKGPLNGCHI) are Cytoplasmic-facing.

Belongs to the G-protein coupled receptor 1 family. As to expression, not detected in the brain regions thalamus, putamen, caudate, frontal cortex, pons, hypothalamus, hippocampus.

The protein localises to the cell membrane. In terms of biological role, orphan receptor. The protein is Probable G-protein coupled receptor 21 (GPR21) of Homo sapiens (Human).